The following is a 48-amino-acid chain: Large ribosomal subunit protein bL32 (48 aa).

Residues M1 to Y20 are disordered. Residues S9–Y20 show a composition bias toward basic residues.

It belongs to the bacterial ribosomal protein bL32 family.

This chain is Large ribosomal subunit protein bL32, found in Helicobacter acinonychis (strain Sheeba).